We begin with the raw amino-acid sequence, 1072 residues long: Netrin receptor unc-5 (1072 aa).

The N-terminal stretch at 1–30 is a signal peptide; sequence MAVINKAGNVIALLLVKLQLILLFTLSVSG. The Extracellular segment spans residues 31-440; sequence ELPQLDYGSL…SSEAEEAGDL (410 aa). Residues 77 to 100 are disordered; it reads LGNSSEDENVRPQQGSSSSGLGSS. An N-linked (GlcNAc...) asparagine glycan is attached at Asn79. Residues 128 to 224 form the Ig-like domain; that stretch reads PIFLIEPESV…RGVVKSQAAT (97 aa). Disulfide bonds link Cys149–Cys207, Cys253–Cys303, Cys336–Cys375, Cys338–Cys378, and Cys352–Cys364. Residues 232–314 form the Ig-like C2-type domain; sequence KSFNQSPTSL…AENIAGRRVS (83 aa). N-linked (GlcNAc...) asparagine glycosylation is present at Asn300. TSP type-1 domains follow at residues 324–379 and 398–499; these read NGGW…AACP and MARW…EQCQ. The helical transmembrane segment at 441-461 threads the bilayer; sequence LLGAPGVGMAALIAAAGVGAV. Residues 462 to 1072 are Cytoplasmic-facing; the sequence is GSPSEATGSS…IVETIGPLWI (611 aa). In terms of domain architecture, ZU5 spans 654–802; it reads SSTYEMLGSA…LGHFTVVAEP (149 aa). A Death domain is found at 980 to 1067; sequence LICGALDPPR…DVLDIIVETI (88 aa).

Belongs to the unc-5 family. Phosphorylated on different cytoplasmic tyrosine residues. In terms of tissue distribution, prior to gastrulation, it is strongly expressed in the presumptive mesoderm. Mesodermal expression begins to fade during stages 13-14, persisting only in the cells that form the dorsal vessel. Expressed within the CNS from late stage 13, shortly after the first axons have extended. Detected in several dispersed clusters of cells within the CNS, increasing in number as development proceeds. Also expressed in the peripheral and exit glia, which migrate laterally out of the CNS between stages 14 and 17. Strongly expressed in motor axons that exit the CNS ipsilaterally via the segmental nerve root (SN). Not expressed on either commissural or longitudinal axons within the CNS, nor on motor axons that exit via the intersegmental nerve (ISN). In the periphery, it is detected on all branches of the SN. Also expressed at high level in exit and peripheral glia along both the SN and ISN.

The protein localises to the membrane. Functionally, receptor for netrin required for motor axon guidance. Mediates both short- and long-range axon motor repulsion in the developing nervous system upon ligand binding. Also involved in glial migration. While short-range repulsion requires both fra and unc-5, long-range repulsion only requires unc-5. In Drosophila melanogaster (Fruit fly), this protein is Netrin receptor unc-5 (unc-5).